Here is a 161-residue protein sequence, read N- to C-terminus: Allophycocyanin beta chain (161 aa).

N4-methylasparagine is present on Asn-71. (2R,3E)-phycocyanobilin is bound at residue Cys-81.

It belongs to the phycobiliprotein family. In terms of assembly, heterodimer of an alpha and a beta chain. Post-translationally, contains one covalently linked phycocyanobilin chromophore.

The protein resides in the cellular thylakoid membrane. Light-harvesting photosynthetic bile pigment-protein from the phycobiliprotein complex. Allophycocyanin has a maximum absorption at approximately 650 nanometers. The polypeptide is Allophycocyanin beta chain (apcB) (Synechocystis sp. (strain ATCC 27184 / PCC 6803 / Kazusa)).